The primary structure comprises 530 residues: Ubiquitin carboxyl-terminal hydrolase 17-like protein 19 (530 aa).

Residues alanine 80–lysine 375 enclose the USP domain. Residue cysteine 89 is the Nucleophile of the active site. Histidine 334 serves as the catalytic Proton acceptor. Basic and acidic residues-rich tracts occupy residues serine 382 to arginine 392 and aspartate 398 to proline 413. Disordered stretches follow at residues serine 382 to proline 413 and lysine 476 to glutamine 530. A compositionally biased stretch (low complexity) spans serine 484–threonine 495. Positions histidine 496–leucine 505 are enriched in polar residues. Residues glycine 510–arginine 524 are compositionally biased toward basic residues.

It belongs to the peptidase C19 family. USP17 subfamily.

The protein localises to the nucleus. Its subcellular location is the endoplasmic reticulum. It carries out the reaction Thiol-dependent hydrolysis of ester, thioester, amide, peptide and isopeptide bonds formed by the C-terminal Gly of ubiquitin (a 76-residue protein attached to proteins as an intracellular targeting signal).. Its function is as follows. Deubiquitinating enzyme that removes conjugated ubiquitin from specific proteins to regulate different cellular processes that may include cell proliferation, progression through the cell cycle, apoptosis, cell migration, and the cellular response to viral infection. The polypeptide is Ubiquitin carboxyl-terminal hydrolase 17-like protein 19 (USP17L19) (Homo sapiens (Human)).